The following is a 151-amino-acid chain: UPF0756 membrane protein Dred_1097 (151 aa).

The next 4 helical transmembrane spans lie at 6-26, 52-72, 75-95, and 111-131; these read IILL…LATA, VGLI…NIVY, LVMK…TLAT, and LIFG…GIPI.

Belongs to the UPF0756 family.

The protein resides in the cell membrane. The polypeptide is UPF0756 membrane protein Dred_1097 (Desulforamulus reducens (strain ATCC BAA-1160 / DSM 100696 / MI-1) (Desulfotomaculum reducens)).